Here is a 299-residue protein sequence, read N- to C-terminus: Apolipoprotein E (299 aa).

Positions 1-18 (MKVLWAVLVVTLLAGCRA) are cleaved as a signal peptide. 7 consecutive repeat copies span residues 74–95 (LLMEDTMKEVKAYKAELEQELA), 96–117 (PMAEDTRARLSKELQAAQARLG), 118–139 (ADMEEVRNRLAQYRGEVQAMLG), 140–161 (QSAEELRARLASHLRKMRKRLL), 162–183 (RDAEDLQKRLAVYKAGAREGAE), 184–205 (RGVSAIRERLASLVEQGRLRSA), and 224–245 (GRLEEVGGQARDRLDVVREQME). Positions 74 to 245 (LLMEDTMKEV…RLDVVREQME (172 aa)) are 8 X 22 AA approximate tandem repeats. Met137 is subject to Methionine sulfoxide. A Phosphoserine modification is found at Ser141. The LDL and other lipoprotein receptors binding stretch occupies residues 152-162 (HLRKMRKRLLR). 156 to 159 (MRKR) lines the heparin pocket. The segment at 204–273 (SALTSQPLRE…GWFEPMVEDM (70 aa)) is lipid-binding and lipoprotein association. A heparin-binding site is contributed by 219 to 226 (GERLRGRL). Residues 261–273 (RLKGWFEPMVEDM) form a specificity for association with VLDL region.

The protein belongs to the apolipoprotein A1/A4/E family. In terms of assembly, homotetramer. May interact with ABCA1; functionally associated with ABCA1 in the biogenesis of HDLs. May interact with APP/A4 amyloid-beta peptide; the interaction is extremely stable in vitro but its physiological significance is unclear. May interact with MAPT. May interact with MAP2. In the cerebrospinal fluid, interacts with secreted SORL1. Interacts with PMEL; this allows the loading of PMEL luminal fragment on ILVs to induce fibril nucleation. Post-translationally, APOE exists as multiple glycosylated and sialylated glycoforms within cells and in plasma. The extent of glycosylation and sialylation are tissue and context specific. Glycated in plasma VLDL. In terms of processing, phosphorylated by FAM20C in the extracellular medium.

The protein localises to the secreted. The protein resides in the extracellular space. It localises to the extracellular matrix. It is found in the extracellular vesicle. Its subcellular location is the endosome. The protein localises to the multivesicular body. APOE is an apolipoprotein, a protein associating with lipid particles, that mainly functions in lipoprotein-mediated lipid transport between organs via the plasma and interstitial fluids. APOE is a core component of plasma lipoproteins and is involved in their production, conversion and clearance. Apolipoproteins are amphipathic molecules that interact both with lipids of the lipoprotein particle core and the aqueous environment of the plasma. As such, APOE associates with chylomicrons, chylomicron remnants, very low density lipoproteins (VLDL) and intermediate density lipoproteins (IDL) but shows a preferential binding to high-density lipoproteins (HDL). It also binds a wide range of cellular receptors including the LDL receptor/LDLR, the LDL receptor-related proteins LRP1, LRP2 and LRP8 and the very low-density lipoprotein receptor/VLDLR that mediate the cellular uptake of the APOE-containing lipoprotein particles. Finally, APOE also has a heparin-binding activity and binds heparan-sulfate proteoglycans on the surface of cells, a property that supports the capture and the receptor-mediated uptake of APOE-containing lipoproteins by cells. A main function of APOE is to mediate lipoprotein clearance through the uptake of chylomicrons, VLDLs, and HDLs by hepatocytes. APOE is also involved in the biosynthesis by the liver of VLDLs as well as their uptake by peripheral tissues ensuring the delivery of triglycerides and energy storage in muscle, heart and adipose tissues. By participating in the lipoprotein-mediated distribution of lipids among tissues, APOE plays a critical role in plasma and tissues lipid homeostasis. APOE is also involved in two steps of reverse cholesterol transport, the HDLs-mediated transport of cholesterol from peripheral tissues to the liver, and thereby plays an important role in cholesterol homeostasis. First, it is functionally associated with ABCA1 in the biogenesis of HDLs in tissues. Second, it is enriched in circulating HDLs and mediates their uptake by hepatocytes. APOE also plays an important role in lipid transport in the central nervous system, regulating neuron survival and sprouting. This chain is Apolipoprotein E (APOE), found in Erethizon dorsatum (North American porcupine).